Here is a 508-residue protein sequence, read N- to C-terminus: Glutamyl-tRNA(Gln) amidotransferase subunit B, mitochondrial (508 aa).

The protein belongs to the GatB/GatE family. GatB subfamily. Subunit of the heterotrimeric GatFAB amidotransferase (AdT) complex, composed of A, B and F subunits.

It localises to the mitochondrion. The catalysed reaction is L-glutamyl-tRNA(Gln) + L-glutamine + ATP + H2O = L-glutaminyl-tRNA(Gln) + L-glutamate + ADP + phosphate + H(+). Allows the formation of correctly charged Gln-tRNA(Gln) through the transamidation of misacylated Glu-tRNA(Gln) in the mitochondria. The reaction takes place in the presence of glutamine and ATP through an activated gamma-phospho-Glu-tRNA(Gln). The polypeptide is Glutamyl-tRNA(Gln) amidotransferase subunit B, mitochondrial (Scheffersomyces stipitis (strain ATCC 58785 / CBS 6054 / NBRC 10063 / NRRL Y-11545) (Yeast)).